Here is a 116-residue protein sequence, read N- to C-terminus: Transcription elongation factor SPT4 homolog 1 (116 aa).

Residues 19–39 (CLRCRLVKTYDQFRDSGCENC) form a C4-type zinc finger.

Belongs to the SPT4 family.

The protein resides in the nucleus. In terms of biological role, may regulate transcription elongation by RNA polymerase II. May enhance transcriptional pausing at sites proximal to the promoter, which may in turn facilitate the assembly of an elongation competent RNA polymerase II complex. This chain is Transcription elongation factor SPT4 homolog 1, found in Arabidopsis thaliana (Mouse-ear cress).